Reading from the N-terminus, the 370-residue chain is Molybdenum import ATP-binding protein ModC (370 aa).

An ABC transporter domain is found at 2–233; that stretch reads SVRVDIGHRL…LDLLPAEERG (232 aa). Residue 31 to 38 coordinates ATP; the sequence is GPSGSGKT. Residues 293–359 enclose the Mop domain; it reads GLSALNILPG…VKTVSFDRAN (67 aa).

This sequence belongs to the ABC transporter superfamily. Molybdate importer (TC 3.A.1.8) family. The complex is composed of two ATP-binding proteins (ModC), two transmembrane proteins (ModB) and a solute-binding protein (ModA).

Its subcellular location is the cell inner membrane. It catalyses the reaction molybdate(out) + ATP + H2O = molybdate(in) + ADP + phosphate + H(+). Its function is as follows. Part of the ABC transporter complex ModABC involved in molybdenum import. Responsible for energy coupling to the transport system. The chain is Molybdenum import ATP-binding protein ModC from Mesorhizobium japonicum (strain LMG 29417 / CECT 9101 / MAFF 303099) (Mesorhizobium loti (strain MAFF 303099)).